The primary structure comprises 382 residues: Mucosal addressin cell adhesion molecule 1 (382 aa).

Positions 1 to 18 (MDFGLALLLAGLLGLLLG) are cleaved as a signal peptide. Residues 19–317 (QSLQVKPLQV…TGSSKPAGDQ (299 aa)) are Extracellular-facing. Ig-like domains are found at residues 23-112 (VKPL…LLVY) and 113-231 (AFPD…TSPE). 3 cysteine pairs are disulfide-bonded: Cys47-Cys94, Cys51-Cys98, and Cys134-Cys204. Asn83 carries an N-linked (GlcNAc...) asparagine glycan. Residues 223-314 (VLHSPTSPEP…VIPTGSSKPA (92 aa)) form a disordered region. A mucin-like region spans residues 226–317 (SPTSPEPPDT…TGSSKPAGDQ (92 aa)). The 1; truncated repeat unit spans residues 228 to 231 (TSPE). The interval 228–271 (TSPEPPDTTSPESPDTTSPESPDTTSQEPPDTTSPEPPDKTSPE) is 5.5 X 8 AA tandem repeats of [PS]-P-D-T-T-S-[QP]-E. 5 tandem repeats follow at residues 232-239 (PPDTTSPE), 240-247 (SPDTTSPE), 248-255 (SPDTTSQE), 256-263 (PPDTTSPE), and 264-271 (PPDKTSPE). Positions 236–261 (TSPESPDTTSPESPDTTSQEPPDTTS) are enriched in low complexity. Positions 277–288 (GSTHTPRSPGST) are enriched in low complexity. Residues 318 to 338 (LPAALWTSSAVLGLLLLALPT) traverse the membrane as a helical segment. Topologically, residues 339–382 (YHLWKRCRHLAEDDTHPPASLRLLPQVSAWAGLRGTGQVGISPS) are cytoplasmic.

In terms of assembly, homodimer. The Ser/Thr-rich mucin-like domain may provide possible sites for O-glycosylation. Highly expressed on high endothelial venules (HEV) and lamina propia venules found in the small intestine, and to a lesser extent in the colon and spleen. Very low levels of expression found in pancreas and brain. Not expressed in the thymus, prostate, ovaries, testis, heart, placenta, lung, liver, skeletal muscle, kidney or peripheral blood leukocytes.

The protein localises to the membrane. Functionally, cell adhesion leukocyte receptor expressed by mucosal venules, helps to direct lymphocyte traffic into mucosal tissues including the Peyer patches and the intestinal lamina propria. It can bind both integrin alpha-4/beta-7 and L-selectin, regulating both the passage and retention of leukocytes. Isoform 2, lacking the mucin-like domain, may be specialized in supporting integrin alpha-4/beta-7-dependent adhesion strengthening, independent of L-selectin binding. In Homo sapiens (Human), this protein is Mucosal addressin cell adhesion molecule 1 (MADCAM1).